A 20-amino-acid polypeptide reads, in one-letter code: Cupiennin-6f (20 aa).

Expressed by the venom gland.

It localises to the secreted. The sequence is that of Cupiennin-6f from Cupiennius salei (American wandering spider).